The following is a 342-amino-acid chain: Ribosomal RNA small subunit methyltransferase H (342 aa).

Residues 36-38, Asp-56, Phe-82, Asp-100, and Gln-107 contribute to the S-adenosyl-L-methionine site; that span reads GGH. Positions 311-342 are disordered; it reads GESGMGKGNSAAASRFPTADSPFPASANGDAA.

This sequence belongs to the methyltransferase superfamily. RsmH family.

It is found in the cytoplasm. It catalyses the reaction cytidine(1402) in 16S rRNA + S-adenosyl-L-methionine = N(4)-methylcytidine(1402) in 16S rRNA + S-adenosyl-L-homocysteine + H(+). Specifically methylates the N4 position of cytidine in position 1402 (C1402) of 16S rRNA. The protein is Ribosomal RNA small subunit methyltransferase H of Xanthomonas axonopodis pv. citri (strain 306).